The chain runs to 727 residues: Translation initiation factor IF-2, mitochondrial (727 aa).

The transit peptide at 1–29 directs the protein to the mitochondrion; sequence MNRKILKLENLLRFHTICRQLHSLCQRRM. Residues 178-348 form the tr-type G domain; the sequence is PRSPVVTIMG…IALAEMLELK (171 aa). The interval 187–194 is G1; that stretch reads GHVDHGKT. 187–194 lines the GTP pocket; that stretch reads GHVDHGKT. The interval 212 to 216 is G2; that stretch reads GITQH. GTP is bound by residues 234–237 and 288–291; these read DTPG and NKCD. Positions 234-237 are G3; the sequence is DTPG. The interval 288–291 is G4; the sequence is NKCD. Residues 324-326 are G5; the sequence is SAL. Phosphothreonine is present on T688.

It belongs to the TRAFAC class translation factor GTPase superfamily. Classic translation factor GTPase family. IF-2 subfamily. In terms of assembly, monomer.

It localises to the mitochondrion. Functionally, one of the essential components for the initiation of protein synthesis. Protects formylmethionyl-tRNA from spontaneous hydrolysis and promotes its binding to the 30S ribosomal subunits. Also involved in the hydrolysis of GTP during the formation of the 70S ribosomal complex. The polypeptide is Translation initiation factor IF-2, mitochondrial (MTIF2) (Bos taurus (Bovine)).